We begin with the raw amino-acid sequence, 682 residues long: Potassium-transporting ATPase ATP-binding subunit (682 aa).

A run of 4 helical transmembrane segments spans residues 34-54, 62-82, 219-239, and 254-274; these read PVMFIVWIGSLLTTCISIAMA, ALFSAAISGWLWVTVLFANFA, IALTILLIALTIVFLLATATL, and VLVALLVCLIPTTIGGLLSAI. The active-site 4-aspartylphosphate intermediate is the D307. ATP-binding positions include D344, E348, 377–384, and K395; that span reads FTAQSRMS. The Mg(2+) site is built by D518 and D522. The next 3 helical transmembrane spans lie at 588–608, 616–636, and 656–676; these read FAIIPAAFAATYPQLNALNIM, AILSAVIFNALIIVFLIPLAL, and IYGLGGLLVPFIGIKVIDLLL.

The protein belongs to the cation transport ATPase (P-type) (TC 3.A.3) family. Type IA subfamily. As to quaternary structure, the system is composed of three essential subunits: KdpA, KdpB and KdpC.

It localises to the cell inner membrane. The catalysed reaction is K(+)(out) + ATP + H2O = K(+)(in) + ADP + phosphate + H(+). Part of the high-affinity ATP-driven potassium transport (or Kdp) system, which catalyzes the hydrolysis of ATP coupled with the electrogenic transport of potassium into the cytoplasm. This subunit is responsible for energy coupling to the transport system and for the release of the potassium ions to the cytoplasm. The polypeptide is Potassium-transporting ATPase ATP-binding subunit (Escherichia coli (strain UTI89 / UPEC)).